A 283-amino-acid polypeptide reads, in one-letter code: Elongation factor Ts (283 aa).

The segment at Thr80 to Val83 is involved in Mg(2+) ion dislocation from EF-Tu.

The protein belongs to the EF-Ts family.

It localises to the cytoplasm. In terms of biological role, associates with the EF-Tu.GDP complex and induces the exchange of GDP to GTP. It remains bound to the aminoacyl-tRNA.EF-Tu.GTP complex up to the GTP hydrolysis stage on the ribosome. The sequence is that of Elongation factor Ts from Enterobacter sp. (strain 638).